Consider the following 382-residue polypeptide: Protein delta homolog 2 (382 aa).

Positions 1-26 are cleaved as a signal peptide; it reads MPSGCRCLNLVCLLCILGATSQPARA. EGF-like domains are found at residues 27–58, 62–89, 91–129, and 131–172; these read DDCS…LHCE, RMPG…KFCD, DEHI…RGCE, and KAGP…AHCE. Over 27-305 the chain is Extracellular; the sequence is DDCSSHCDLA…RQESGLGESS (279 aa). Disulfide bonds link Cys-29-Cys-40, Cys-33-Cys-46, Cys-48-Cys-57, Cys-66-Cys-71, Cys-79-Cys-88, Cys-95-Cys-107, Cys-101-Cys-117, Cys-119-Cys-128, Cys-135-Cys-148, Cys-142-Cys-160, Cys-162-Cys-171, Cys-178-Cys-189, Cys-183-Cys-198, Cys-200-Cys-209, Cys-216-Cys-227, Cys-221-Cys-236, and Cys-238-Cys-247. N-linked (GlcNAc...) asparagine glycosylation is present at Asn-157. The 37-residue stretch at 174–210 folds into the EGF-like 5; calcium-binding domain; that stretch reads NVDDCLMRPCANGATCIDGINRFSCLCPEGFAGRFCT. Positions 212–248 constitute an EGF-like 6; calcium-binding domain; sequence NLDDCASRPCQRGARCRDRVHDFDCLCPSGYGGKTCE. The helical transmembrane segment at 306 to 326 threads the bilayer; sequence LVALVVFGSLTAALVLATVLL. Residues 327–382 are Cytoplasmic-facing; sequence TLRAWRRGICPTGPCCYPAPHYAPARQDQECQVSMLPAGFPLSPDLPPEPGKTTAL.

As to expression, detected in a number of tissues including lung, brain, adrenal gland, testis, adult liver, placenta, ovary and thymus. Not detected in fetal liver or in adult spleen, muscle and heart.

The protein localises to the membrane. Regulates adipogenesis. The sequence is that of Protein delta homolog 2 (Dlk2) from Mus musculus (Mouse).